Here is a 186-residue protein sequence, read N- to C-terminus: Ribosome-recycling factor (186 aa).

It belongs to the RRF family.

It localises to the cytoplasm. Its function is as follows. Responsible for the release of ribosomes from messenger RNA at the termination of protein biosynthesis. May increase the efficiency of translation by recycling ribosomes from one round of translation to another. The sequence is that of Ribosome-recycling factor from Burkholderia cenocepacia (strain HI2424).